Consider the following 245-residue polypeptide: Thiopurine S-methyltransferase (245 aa).

S-adenosyl-L-methionine is bound at residue 29–40 (WREKWVDGKIGF). F40 provides a ligand contact to substrate. K58 carries the post-translational modification N6-acetyllysine. The S-adenosyl-L-methionine site is built by L69, E90, and R152.

It belongs to the class I-like SAM-binding methyltransferase superfamily. TPMT family. Monomer.

The protein resides in the cytoplasm. The catalysed reaction is S-adenosyl-L-methionine + a thiopurine = S-adenosyl-L-homocysteine + a thiopurine S-methylether.. This chain is Thiopurine S-methyltransferase (TPMT), found in Lynx rufus (Bobcat).